The sequence spans 134 residues: Profilin-1 (134 aa).

Cysteine 13 and cysteine 118 form a disulfide bridge. The short motif at 84–100 (AVIRGKKGSGGITIKKT) is the Involved in PIP2 interaction element. Threonine 114 carries the phosphothreonine modification.

Belongs to the profilin family. As to quaternary structure, occurs in many kinds of cells as a complex with monomeric actin in a 1:1 ratio. Post-translationally, phosphorylated by MAP kinases.

The protein resides in the cytoplasm. It localises to the cytoskeleton. Binds to actin and affects the structure of the cytoskeleton. At high concentrations, profilin prevents the polymerization of actin, whereas it enhances it at low concentrations. This is Profilin-1 from Olea europaea (Common olive).